Reading from the N-terminus, the 705-residue chain is Calpastatin (705 aa).

2 disordered regions span residues Met1 to Ala211 and Leu226 to Pro493. Composition is skewed to basic and acidic residues over residues Lys7 to Pro17 and Val24 to Val62. Residue Lys10 forms a Glycyl lysine isopeptide (Lys-Gly) (interchain with G-Cter in SUMO2) linkage. An N6-acetyllysine modification is found at Lys28. Composition is skewed to low complexity over residues Ser63 to Glu72 and Pro94 to Glu103. The residue at position 65 (Ser65) is a Phosphoserine. Position 115 is a phosphothreonine (Thr115). Residues Thr135 to Lys151 are compositionally biased toward acidic residues. An Inhibitory domain 1 repeat occupies Glu149–Ser202. Residues Glu173–Gly194 show a composition bias toward basic and acidic residues. Phosphoserine is present on residues Ser202 and Ser230. A compositionally biased stretch (basic and acidic residues) spans Asp234–Leu248. Residues Thr275–Leu286 are compositionally biased toward polar residues. Composition is skewed to basic and acidic residues over residues Arg289–Gly317 and Tyr327–Ser352. One copy of the Inhibitory domain 2 repeat lies at Glu292–Ala344. Phosphoserine is present on residues Ser352, Ser354, and Ser361. Positions Glu355 to Phe364 are enriched in acidic residues. Over residues Asp365–Glu381 the composition is skewed to basic and acidic residues. Residue Ser428 is modified to Phosphoserine. The segment covering Pro430–Glu489 has biased composition (basic and acidic residues). The stretch at Ala434–Val487 is one Inhibitory domain 3 repeat. Phosphoserine occurs at positions 504 and 515. A disordered region spans residues Val527–Ser705. A compositionally biased stretch (low complexity) spans Gln533–Ala542. Phosphoserine is present on Ser563. One copy of the Inhibitory domain 4 repeat lies at Pro571 to Gln624. Over residues Pro571–Arg625 the composition is skewed to basic and acidic residues. A compositionally biased stretch (low complexity) spans Asp651–Asp662. Basic and acidic residues predominate over residues Lys683–Ser705.

This sequence belongs to the protease inhibitor I27 (calpastatin) family.

Specific inhibition of calpain (calcium-dependent cysteine protease). Plays a key role in postmortem tenderization of meat and have been proposed to be involved in muscle protein degradation in living tissue. This Bos taurus (Bovine) protein is Calpastatin (CAST).